Reading from the N-terminus, the 254-residue chain is Phosphatidylglycerophosphatase B (254 aa).

Residues 2 to 24 traverse the membrane as a helical segment; that stretch reads RSIARRTAVGAALLLVMPVAVWI. At 25 to 54 the chain is on the periplasmic side; sequence SGWRWQPGEQSWLLKAAFWVTETVTQPWGV. The chain crosses the membrane as a helical span at residues 55 to 66; the sequence is ITHLILFGWFLW. Residues 67–71 lie on the Cytoplasmic side of the membrane; sequence CLRFR. A helical membrane pass occupies residues 72 to 94; sequence IKAAFVLFAILAAAILVGQGVKS. Topologically, residues 95–161 are periplasmic; that stretch reads WIKDKVQEPR…QKETGFAFPS (67 aa). A phosphatase sequence motif I region spans residues 97-105; it reads KDKVQEPRP. The phosphatase sequence motif II stretch occupies residues 160–163; the sequence is PSGH. A helical transmembrane segment spans residues 162–176; the sequence is GHTMFAASWALLAVG. His163 acts as the Proton donor; for a subset of substrates in catalysis. Residues 177–182 lie on the Cytoplasmic side of the membrane; that stretch reads LLWPRR. The chain crosses the membrane as a helical span at residues 183–202; that stretch reads RTLTIAILLVWATGVMGSRL. The segment at 200 to 211 is phosphatase sequence motif III; the sequence is SRLLLGMHWPRD. Residues 203–208 lie on the Periplasmic side of the membrane; sequence LLGMHW. His207 functions as the Nucleophile in the catalytic mechanism. The chain crosses the membrane as a helical span at residues 209–232; the sequence is PRDLVVATLISWALVAVATWLAQR. The Cytoplasmic segment spans residues 233–254; the sequence is ICGPLTPPAEENREIAQREQES.

It belongs to the PA-phosphatase related phosphoesterase family. The N-terminus is blocked.

It localises to the cell inner membrane. Its subcellular location is the cell outer membrane. The catalysed reaction is a 1,2-diacyl-sn-glycero-3-phospho-(1'-sn-glycero-3'-phosphate) + H2O = a 1,2-diacyl-sn-glycero-3-phospho-(1'-sn-glycerol) + phosphate. It catalyses the reaction a 1,2-diacyl-sn-glycerol 3-diphosphate + H2O = a 1,2-diacyl-sn-glycero-3-phosphate + phosphate + H(+). It carries out the reaction a 1,2-diacyl-sn-glycero-3-phosphate + H2O = a 1,2-diacyl-sn-glycerol + phosphate. The enzyme catalyses di-trans,octa-cis-undecaprenyl diphosphate + H2O = di-trans,octa-cis-undecaprenyl phosphate + phosphate + H(+). It functions in the pathway phospholipid metabolism; phosphatidylglycerol biosynthesis; phosphatidylglycerol from CDP-diacylglycerol: step 2/2. Catalyzes the dephosphorylation of diacylglycerol diphosphate (DGPP) to phosphatidate (PA) and the subsequent dephosphorylation of PA to diacylglycerol (DAG). Also has undecaprenyl pyrophosphate phosphatase activity, required for the biosynthesis of the lipid carrier undecaprenyl phosphate. Can also use lysophosphatidic acid (LPA) and phosphatidylglycerophosphate as substrates. The pattern of activities varies according to subcellular location, PGP phosphatase activity is higher in the cytoplasmic membrane, whereas PA and LPA phosphatase activities are higher in the outer membrane. Activity is independent of a divalent cation ion and insensitive to inhibition by N-ethylmaleimide. This is Phosphatidylglycerophosphatase B (pgpB) from Escherichia coli O157:H7.